Consider the following 252-residue polypeptide: Ubiquinone biosynthesis O-methyltransferase (252 aa).

S-adenosyl-L-methionine-binding residues include Arg45, Gly76, Asp97, and Met141.

It belongs to the methyltransferase superfamily. UbiG/COQ3 family.

It catalyses the reaction a 3-demethylubiquinol + S-adenosyl-L-methionine = a ubiquinol + S-adenosyl-L-homocysteine + H(+). The catalysed reaction is a 3-(all-trans-polyprenyl)benzene-1,2-diol + S-adenosyl-L-methionine = a 2-methoxy-6-(all-trans-polyprenyl)phenol + S-adenosyl-L-homocysteine + H(+). Its pathway is cofactor biosynthesis; ubiquinone biosynthesis. O-methyltransferase that catalyzes the 2 O-methylation steps in the ubiquinone biosynthetic pathway. This chain is Ubiquinone biosynthesis O-methyltransferase, found in Caulobacter sp. (strain K31).